The sequence spans 249 residues: Methionine aminopeptidase (249 aa).

Histidine 77 contacts substrate. Residues aspartate 94, aspartate 105, and histidine 168 each contribute to the a divalent metal cation site. Histidine 175 is a binding site for substrate. A divalent metal cation-binding residues include glutamate 201 and glutamate 232.

This sequence belongs to the peptidase M24A family. Methionine aminopeptidase type 1 subfamily. Monomer. Co(2+) is required as a cofactor. Zn(2+) serves as cofactor. It depends on Mn(2+) as a cofactor. Requires Fe(2+) as cofactor.

The catalysed reaction is Release of N-terminal amino acids, preferentially methionine, from peptides and arylamides.. Its function is as follows. Removes the N-terminal methionine from nascent proteins. The N-terminal methionine is often cleaved when the second residue in the primary sequence is small and uncharged (Met-Ala-, Cys, Gly, Pro, Ser, Thr, or Val). Requires deformylation of the N(alpha)-formylated initiator methionine before it can be hydrolyzed. This is Methionine aminopeptidase from Clostridium perfringens (strain 13 / Type A).